Here is a 297-residue protein sequence, read N- to C-terminus: UTP--glucose-1-phosphate uridylyltransferase (297 aa).

This sequence belongs to the UDPGP type 2 family.

It catalyses the reaction alpha-D-glucose 1-phosphate + UTP + H(+) = UDP-alpha-D-glucose + diphosphate. It participates in carbohydrate metabolism; nucleotide-sugar metabolism. It functions in the pathway bacterial outer membrane biogenesis; lipopolysaccharide biosynthesis. May play a role in stationary phase survival. This is UTP--glucose-1-phosphate uridylyltransferase (galF) from Salmonella typhimurium (strain LT2 / SGSC1412 / ATCC 700720).